The primary structure comprises 294 residues: uncharacterized protein (294 aa).

Residues 5–25 traverse the membrane as a helical segment; that stretch reads ILIILIIIIIVIISLIYLKNF. 4 N-linked (GlcNAc...) asparagine; by host glycosylation sites follow: N151, N170, N205, and N271.

It localises to the membrane. This is an uncharacterized protein from Acanthamoeba polyphaga (Amoeba).